The primary structure comprises 434 residues: ATP-dependent protease ATPase subunit HslU (434 aa).

Residues valine 18, 60 to 65 (GVGKTE), aspartate 247, glutamate 312, and arginine 384 contribute to the ATP site.

This sequence belongs to the ClpX chaperone family. HslU subfamily. As to quaternary structure, a double ring-shaped homohexamer of HslV is capped on each side by a ring-shaped HslU homohexamer. The assembly of the HslU/HslV complex is dependent on binding of ATP.

Its subcellular location is the cytoplasm. ATPase subunit of a proteasome-like degradation complex; this subunit has chaperone activity. The binding of ATP and its subsequent hydrolysis by HslU are essential for unfolding of protein substrates subsequently hydrolyzed by HslV. HslU recognizes the N-terminal part of its protein substrates and unfolds these before they are guided to HslV for hydrolysis. The protein is ATP-dependent protease ATPase subunit HslU of Bradyrhizobium sp. (strain BTAi1 / ATCC BAA-1182).